A 421-amino-acid chain; its full sequence is MLKEEDKIFTNLHGQQSHDLKSSKKRGDWENTKALLDKGRDFIVEEVKKSGLRGRGGAGFSTGMKWSFMPKNSEKPCYLVVNADESEPGTCKDRDILRFEPHKLIEGCLLASFAIGANNCYIYIRGEFYNEASNIQRALDEAYKEGLIGKNACDSGFDCNIYLHRGAGAYICGEETALLESLEGKKGMPRLKPPFPAGFGLYGCPTTINNVESIAVVPTILRRGASWFAGIGKPNNTGTKIFCISGHVNKPCNVEEAMGISLKELIEKYAGGVRGGWDNLKAIIPGGSSVPLLPKLLCEVEMDFDSLRTAGSGLGTGGIIVMDKSTDIIYAIARLSKFYMHESCGQCTPCREGTGWMWRVMMRLVKGNAKKSEIDELLNVTKEIEGHTICALGDAAAWPIQGLIRHFRSEIEARIKSYSVV.

Positions 1–25 (MLKEEDKIFTNLHGQQSHDLKSSKK) are disordered. Residues 16 to 25 (QSHDLKSSKK) are compositionally biased toward basic and acidic residues. Residue 54-63 (GRGGAGFSTG) coordinates NAD(+). 166 to 213 (GAGAYICGEETALLESLEGKKGMPRLKPPFPAGFGLYGCPTTINNVES) serves as a coordination point for FMN. 4 residues coordinate [4Fe-4S] cluster: Cys344, Cys347, Cys350, and Cys390.

It belongs to the complex I 51 kDa subunit family. FMN serves as cofactor. The cofactor is [4Fe-4S] cluster.

It carries out the reaction a quinone + NADH + 5 H(+)(in) = a quinol + NAD(+) + 4 H(+)(out). Its function is as follows. NDH-1 shuttles electrons from NADH, via FMN and iron-sulfur (Fe-S) centers, to quinones in the respiratory chain. Couples the redox reaction to proton translocation (for every two electrons transferred, four hydrogen ions are translocated across the cytoplasmic membrane), and thus conserves the redox energy in a proton gradient. In Rickettsia massiliae (strain Mtu5), this protein is NADH-quinone oxidoreductase subunit F (nuoF).